A 439-amino-acid chain; its full sequence is Ribulose bisphosphate carboxylase/oxygenase activase, chloroplastic (439 aa).

167-174 (GGKGQGKS) provides a ligand contact to ATP.

Belongs to the RuBisCO activase family.

The protein localises to the plastid. It is found in the chloroplast stroma. In terms of biological role, activation of RuBisCO (ribulose-1,5-bisphosphate carboxylase/oxygenase; EC 4.1.1.39) involves the ATP-dependent carboxylation of the epsilon-amino group of lysine leading to a carbamate structure. In Vigna radiata var. radiata (Mung bean), this protein is Ribulose bisphosphate carboxylase/oxygenase activase, chloroplastic (RCA).